Here is a 59-residue protein sequence, read N- to C-terminus: Large ribosomal subunit protein uL30 (59 aa).

It belongs to the universal ribosomal protein uL30 family. Part of the 50S ribosomal subunit.

In Mycolicibacterium vanbaalenii (strain DSM 7251 / JCM 13017 / BCRC 16820 / KCTC 9966 / NRRL B-24157 / PYR-1) (Mycobacterium vanbaalenii), this protein is Large ribosomal subunit protein uL30.